We begin with the raw amino-acid sequence, 227 residues long: Cytochrome c oxidase subunit 2 (227 aa).

Topologically, residues 1-14 are mitochondrial intermembrane; the sequence is MAYPFQLGLQDATS. A helical membrane pass occupies residues 15–45; sequence PIMEELTNFHDHTLMIVFLISSLVLYIISLM. Residues 46 to 59 lie on the Mitochondrial matrix side of the membrane; it reads LTTKLTHTSTMDAQ. A helical membrane pass occupies residues 60–87; the sequence is EVETIWTILPAVILILIALPSLRILYMM. Topologically, residues 88–227 are mitochondrial intermembrane; that stretch reads DEINNPVLTV…HFENWSASMI (140 aa). His161, Cys196, Glu198, Cys200, His204, and Met207 together coordinate Cu cation. Glu198 is a binding site for Mg(2+).

It belongs to the cytochrome c oxidase subunit 2 family. Component of the cytochrome c oxidase (complex IV, CIV), a multisubunit enzyme composed of 14 subunits. The complex is composed of a catalytic core of 3 subunits MT-CO1, MT-CO2 and MT-CO3, encoded in the mitochondrial DNA, and 11 supernumerary subunits COX4I, COX5A, COX5B, COX6A, COX6B, COX6C, COX7A, COX7B, COX7C, COX8 and NDUFA4, which are encoded in the nuclear genome. The complex exists as a monomer or a dimer and forms supercomplexes (SCs) in the inner mitochondrial membrane with NADH-ubiquinone oxidoreductase (complex I, CI) and ubiquinol-cytochrome c oxidoreductase (cytochrome b-c1 complex, complex III, CIII), resulting in different assemblies (supercomplex SCI(1)III(2)IV(1) and megacomplex MCI(2)III(2)IV(2)). Found in a complex with TMEM177, COA6, COX18, COX20, SCO1 and SCO2. Interacts with TMEM177 in a COX20-dependent manner. Interacts with COX20. Interacts with COX16. Cu cation is required as a cofactor.

The protein localises to the mitochondrion inner membrane. The catalysed reaction is 4 Fe(II)-[cytochrome c] + O2 + 8 H(+)(in) = 4 Fe(III)-[cytochrome c] + 2 H2O + 4 H(+)(out). In terms of biological role, component of the cytochrome c oxidase, the last enzyme in the mitochondrial electron transport chain which drives oxidative phosphorylation. The respiratory chain contains 3 multisubunit complexes succinate dehydrogenase (complex II, CII), ubiquinol-cytochrome c oxidoreductase (cytochrome b-c1 complex, complex III, CIII) and cytochrome c oxidase (complex IV, CIV), that cooperate to transfer electrons derived from NADH and succinate to molecular oxygen, creating an electrochemical gradient over the inner membrane that drives transmembrane transport and the ATP synthase. Cytochrome c oxidase is the component of the respiratory chain that catalyzes the reduction of oxygen to water. Electrons originating from reduced cytochrome c in the intermembrane space (IMS) are transferred via the dinuclear copper A center (CU(A)) of subunit 2 and heme A of subunit 1 to the active site in subunit 1, a binuclear center (BNC) formed by heme A3 and copper B (CU(B)). The BNC reduces molecular oxygen to 2 water molecules using 4 electrons from cytochrome c in the IMS and 4 protons from the mitochondrial matrix. This Batomys granti (Luzon hairy-tailed rat) protein is Cytochrome c oxidase subunit 2 (MT-CO2).